The following is a 619-amino-acid chain: 1-deoxy-D-xylulose-5-phosphate synthase (619 aa).

Thiamine diphosphate is bound by residues His74 and 115–117; that span reads GHS. Asp146 provides a ligand contact to Mg(2+). Thiamine diphosphate contacts are provided by residues 147–148, Asn175, Tyr285, and Glu365; that span reads GA. Asn175 is a Mg(2+) binding site.

The protein belongs to the transketolase family. DXPS subfamily. As to quaternary structure, homodimer. The cofactor is Mg(2+). It depends on thiamine diphosphate as a cofactor.

It carries out the reaction D-glyceraldehyde 3-phosphate + pyruvate + H(+) = 1-deoxy-D-xylulose 5-phosphate + CO2. The protein operates within metabolic intermediate biosynthesis; 1-deoxy-D-xylulose 5-phosphate biosynthesis; 1-deoxy-D-xylulose 5-phosphate from D-glyceraldehyde 3-phosphate and pyruvate: step 1/1. Functionally, catalyzes the acyloin condensation reaction between C atoms 2 and 3 of pyruvate and glyceraldehyde 3-phosphate to yield 1-deoxy-D-xylulose-5-phosphate (DXP). The chain is 1-deoxy-D-xylulose-5-phosphate synthase from Clostridium perfringens (strain SM101 / Type A).